Reading from the N-terminus, the 3065-residue chain is MAX gene-associated protein (3065 aa).

Residues lysine 4 and lysine 178 each participate in a glycyl lysine isopeptide (Lys-Gly) (interchain with G-Cter in SUMO2) cross-link. The segment at residues 84-260 is a DNA-binding region (T-box); it reads MWNEFYHRST…YNPFAKGFRD (177 aa). A compositionally biased stretch (basic and acidic residues) spans 259–277; that stretch reads RDDGLNNKPQRDGKQKNSS. The disordered stretch occupies residues 259–322; it reads RDDGLNNKPQ…GHETSGKGLE (64 aa). Residues 278 to 289 show a composition bias toward polar residues; it reads DQEGNNISSSSG. A compositionally biased stretch (basic and acidic residues) spans 309-322; that stretch reads PLSRGHETSGKGLE. Glycyl lysine isopeptide (Lys-Gly) (interchain with G-Cter in SUMO2) cross-links involve residues lysine 323, lysine 329, lysine 349, lysine 432, lysine 460, lysine 465, and lysine 482. Serine 534 carries the post-translational modification Phosphoserine. Residue lysine 570 forms a Glycyl lysine isopeptide (Lys-Gly) (interchain with G-Cter in SUMO2) linkage. The segment at 604–653 is disordered; sequence QNASPNVPGKRGRPRKLKLCKAGRPPKNTGKSLISTKNTPVSPGSTFPDV. Phosphoserine is present on serine 607. Residue lysine 613 forms a Glycyl lysine isopeptide (Lys-Gly) (interchain with G-Cter in SUMO2) linkage. Residues 613 to 624 show a composition bias toward basic residues; sequence KRGRPRKLKLCK. Polar residues predominate over residues 632-648; that stretch reads TGKSLISTKNTPVSPGS. Residue serine 645 is modified to Phosphoserine. Residues lysine 654, lysine 785, lysine 791, lysine 817, and lysine 826 each participate in a glycyl lysine isopeptide (Lys-Gly) (interchain with G-Cter in SUMO2) cross-link. Serine 851 carries the phosphoserine modification. The interval 881 to 911 is disordered; it reads STSYSLKPHSVPPVSRKAKSQNRQATFSGRT. Over residues 901-911 the composition is skewed to polar residues; sequence QNRQATFSGRT. At serine 924 the chain carries Phosphoserine. Lysine 928 participates in a covalent cross-link: Glycyl lysine isopeptide (Lys-Gly) (interchain with G-Cter in SUMO2). Residues 971–990 are disordered; sequence RQAQQQQQQQQGSRPPGLSK. Residues 972-981 show a composition bias toward low complexity; the sequence is QAQQQQQQQQ. Glycyl lysine isopeptide (Lys-Gly) (interchain with G-Cter in SUMO2) cross-links involve residues lysine 990, lysine 1091, lysine 1140, lysine 1162, lysine 1199, and lysine 1207. Residues 1111–1147 are a coiled coil; the sequence is YDTLGEEAREEEEGIREEEEQLKEKKKRKKLEYTICE. Serine 1208 carries the post-translational modification Phosphoserine. 2 disordered regions span residues 1246 to 1332 and 1380 to 1429; these read RKKE…PGGP and RKSR…MEDI. Low complexity-rich tracts occupy residues 1253 to 1269 and 1310 to 1322; these read QPSS…QQTS and KSSC…SSTS. Phosphoserine occurs at positions 1430 and 1457. Residues lysine 1461 and lysine 1502 each participate in a glycyl lysine isopeptide (Lys-Gly) (interchain with G-Cter in SUMO2) cross-link. Disordered stretches follow at residues 1488–1517, 1905–1927, and 1967–2029; these read SRKP…PGKN, SPPE…YSSG, and QMKR…EDRG. 2 stretches are compositionally biased toward polar residues: residues 1495–1514 and 1911–1927; these read LPST…TNRP and SFAS…YSSG. Over residues 1968-1994 the composition is skewed to basic and acidic residues; sequence MKRESQNPDQKDETNSIKREQETKKVL. Glycyl lysine isopeptide (Lys-Gly) (interchain with G-Cter in SUMO2) cross-links involve residues lysine 1985 and lysine 1992. Residues 2008-2023 are compositionally biased toward polar residues; it reads IKQNSGAATSEETLND. Residues lysine 2103, lysine 2113, lysine 2135, lysine 2139, lysine 2146, lysine 2159, lysine 2194, lysine 2206, and lysine 2238 each participate in a glycyl lysine isopeptide (Lys-Gly) (interchain with G-Cter in SUMO2) cross-link. The disordered stretch occupies residues 2258-2316; it reads RRAAKSSRGNGHFQGHLLLPGEQIQPKQEKKGGRSSADFTVLDLEEDDEDDNEKTDDSI. Arginine 2265 is subject to Omega-N-methylarginine. Residue lysine 2284 forms a Glycyl lysine isopeptide (Lys-Gly) (interchain with G-Cter in SUMO2) linkage. Acidic residues predominate over residues 2300-2316; the sequence is DLEEDDEDDNEKTDDSI. Glycyl lysine isopeptide (Lys-Gly) (interchain with G-Cter in SUMO2) cross-links involve residues lysine 2378, lysine 2413, lysine 2457, and lysine 2532. One can recognise a bHLH domain in the interval 2423 to 2474; sequence YYRRTHTANERRRRGEMRDLFEKLKITLGLLHSSKVSKSLILTRAFSEIQGL. Serine 2541 is modified (phosphoserine). Lysine 2546 participates in a covalent cross-link: Glycyl lysine isopeptide (Lys-Gly) (interchain with G-Cter in SUMO2). Positions 2576–2595 are disordered; that stretch reads KKDQATENTSPLNTPHTSAN. A compositionally biased stretch (polar residues) spans 2581-2595; that stretch reads TENTSPLNTPHTSAN. Residues lysine 2629, lysine 2679, lysine 2698, and lysine 2784 each participate in a glycyl lysine isopeptide (Lys-Gly) (interchain with G-Cter in SUMO2) cross-link. A disordered region spans residues 2668 to 2709; that stretch reads GSKYPHEVPDSKPSDHLKDTVRNEDNSLEDKGRISSRGNRDG. A compositionally biased stretch (basic and acidic residues) spans 2671–2709; it reads YPHEVPDSKPSDHLKDTVRNEDNSLEDKGRISSRGNRDG. The stretch at 2817-2841 forms a coiled coil; it reads DDTDETLTSLLNEIAFLNQQLNDDS. Phosphoserine occurs at positions 2910 and 2921. The disordered stretch occupies residues 2944–2968; sequence AIDGGKNTSGLPAEPESVSSPPTLH. Phosphoserine is present on serine 2978. Lysine 3041 participates in a covalent cross-link: Glycyl lysine isopeptide (Lys-Gly) (interchain with G-Cter in SUMO2).

Interacts with MAX. Requires dimerization with MAX for E-box binding. Component of some MLL1/MLL complex, at least composed of the core components KMT2A/MLL1, ASH2L, HCFC1/HCF1, WDR5 and RBBP5, as well as the facultative components BACC1, CHD8, E2F6, HSP70, INO80C, KANSL1, LAS1L, MAX, MCRS1, MGA, MYST1/MOF, PELP1, PHF20, PRP31, RING2, RUVB1/TIP49A, RUVB2/TIP49B, SENP3, TAF1, TAF4, TAF6, TAF7, TAF9 and TEX10. Interacts with ZMYND11. In terms of tissue distribution, highly expressed in germ cells and granulosa cells.

It localises to the nucleus. Functions as a dual-specificity transcription factor, regulating the expression of both MAX-network and T-box family target genes. Functions as a repressor or an activator. Binds to 5'-AATTTCACACCTAGGTGTGAAATT-3' core sequence and seems to regulate MYC-MAX target genes. Suppresses transcriptional activation by MYC and inhibits MYC-dependent cell transformation. Function activated by heterodimerization with MAX. This heterodimerization serves the dual function of both generating an E-box-binding heterodimer and simultaneously blocking interaction of a corepressor. The chain is MAX gene-associated protein from Homo sapiens (Human).